The chain runs to 374 residues: Speckle-type POZ protein B (374 aa).

An MATH domain is found at Lys31–Val161. Residues Val71–Gly191 are required for nuclear localization. In terms of domain architecture, BTB spans Gln173–Leu297. The homodimerization stretch occupies residues Leu297–Ser355.

It belongs to the Tdpoz family. Homodimer. Part of cullin-RING-based BCR (BTB-CUL3-RBX1) E3 ubiquitin-protein ligase complexes that contain CUL3 and SPOP, plus a target protein.

Its subcellular location is the nucleus. The protein localises to the nucleus speckle. It functions in the pathway protein modification; protein ubiquitination. Its function is as follows. Component of a cullin-RING-based BCR (BTB-CUL3-RBX1) E3 ubiquitin-protein ligase complex that mediates the ubiquitination of target proteins, leading most often to their proteasomal degradation. The polypeptide is Speckle-type POZ protein B (spop-b) (Xenopus laevis (African clawed frog)).